We begin with the raw amino-acid sequence, 326 residues long: CRISPR-associated endonuclease Cas1 (326 aa).

Mn(2+) contacts are provided by Glu191, His255, and Asp269.

Belongs to the CRISPR-associated endonuclease Cas1 family. As to quaternary structure, homodimer. Interacts with Cas3, in the absence of crRNA. The cofactor is Mg(2+). Requires Mn(2+) as cofactor.

CRISPR (clustered regularly interspaced short palindromic repeat), is an adaptive immune system that provides protection against mobile genetic elements (viruses, transposable elements and conjugative plasmids). CRISPR clusters contain sequences complementary to antecedent mobile elements and target invading nucleic acids. CRISPR clusters are transcribed and processed into CRISPR RNA (crRNA). Acts as a dsDNA endonuclease. Involved in the integration of spacer DNA into the CRISPR cassette. The sequence is that of CRISPR-associated endonuclease Cas1 from Pectobacterium atrosepticum (strain SCRI 1043 / ATCC BAA-672) (Erwinia carotovora subsp. atroseptica).